The following is a 451-amino-acid chain: Phosphoglucosamine mutase (451 aa).

S102 functions as the Phosphoserine intermediate in the catalytic mechanism. Residues S102, D242, D244, and D246 each coordinate Mg(2+). Residue S102 is modified to Phosphoserine.

This sequence belongs to the phosphohexose mutase family. Mg(2+) serves as cofactor. Activated by phosphorylation.

It catalyses the reaction alpha-D-glucosamine 1-phosphate = D-glucosamine 6-phosphate. Its function is as follows. Catalyzes the conversion of glucosamine-6-phosphate to glucosamine-1-phosphate. The polypeptide is Phosphoglucosamine mutase (Staphylococcus carnosus (strain TM300)).